The sequence spans 457 residues: Gamma-aminobutyric acid receptor subunit gamma-4 (457 aa).

The N-terminal stretch at 1–21 is a signal peptide; that stretch reads MPAMVLLLCLALGPALRSARC. Residues 22–256 are Extracellular-facing; the sequence is ESTEEYDYDY…VSFDLSRRMG (235 aa). Residues N35 and N112 are each glycosylated (N-linked (GlcNAc...) asparagine). C173 and C187 are oxidised to a cystine. N230 carries an N-linked (GlcNAc...) asparagine glycan. 3 helical membrane-spanning segments follow: residues 257–279, 283–305, and 317–339; these read YFAI…SFWI, STPA…STIS, and AMDL…YATL. The Cytoplasmic portion of the chain corresponds to 340–433; sequence NYLVGNKKPL…VRIHISRLDS (94 aa). Residues 434 to 457 form a helical membrane-spanning segment; it reads YSRVFFPTAFLLFNIVYWIAYLYL.

The protein belongs to the ligand-gated ion channel (TC 1.A.9) family. Gamma-aminobutyric acid receptor (TC 1.A.9.5) subfamily. GABRG4 sub-subfamily. In terms of assembly, generally pentameric. There are five types of GABA(A) receptor chains: alpha, beta, gamma, delta, and rho. In terms of tissue distribution, abundant in several brain regions, including the ectostriatum, nucleus rotundus and hyperstriatum ventrale.

Its subcellular location is the postsynaptic cell membrane. The protein resides in the cell membrane. Its function is as follows. GABA, the major inhibitory neurotransmitter in the vertebrate brain, mediates neuronal inhibition by binding to the GABA/benzodiazepine receptor and opening an integral chloride channel. In Gallus gallus (Chicken), this protein is Gamma-aminobutyric acid receptor subunit gamma-4 (GABRG4).